A 276-amino-acid polypeptide reads, in one-letter code: Tryptophan synthase alpha chain (276 aa).

Active-site proton acceptor residues include glutamate 46 and glutamate 57.

Belongs to the TrpA family. As to quaternary structure, tetramer of two alpha and two beta chains.

The catalysed reaction is (1S,2R)-1-C-(indol-3-yl)glycerol 3-phosphate + L-serine = D-glyceraldehyde 3-phosphate + L-tryptophan + H2O. It participates in amino-acid biosynthesis; L-tryptophan biosynthesis; L-tryptophan from chorismate: step 5/5. Functionally, the alpha subunit is responsible for the aldol cleavage of indoleglycerol phosphate to indole and glyceraldehyde 3-phosphate. The sequence is that of Tryptophan synthase alpha chain from Halobacterium salinarum (strain ATCC 29341 / DSM 671 / R1).